We begin with the raw amino-acid sequence, 306 residues long: Palmitoyl-protein thioesterase 1 (306 aa).

The first 27 residues, 1–27, serve as a signal peptide directing secretion; sequence MASSCSRRLLAAALLPWCCAAWALGHL. 3 cysteine pairs are disulfide-bonded: C45-C46, C96-C128, and C152-C160. Residue S115 is part of the active site. N197, N212, and N232 each carry an N-linked (GlcNAc...) asparagine glycan. Active-site residues include D233 and H289.

It belongs to the palmitoyl-protein thioesterase family. In terms of assembly, interacts with CLN5, ATP5F1A and ATP5F1B. Glycosylated. Highest level in testis and kidney, lower in heart, brain and lung and lowest in skeletal muscle.

The protein localises to the lysosome. Its subcellular location is the secreted. It is found in the golgi apparatus. The protein resides in the endoplasmic reticulum. The enzyme catalyses S-hexadecanoyl-L-cysteinyl-[protein] + H2O = L-cysteinyl-[protein] + hexadecanoate + H(+). The catalysed reaction is hexadecanoyl-CoA + H2O = hexadecanoate + CoA + H(+). It carries out the reaction S-hexadecanoyl-N-acetylcysteamine + H2O = N-acetylcysteamine + hexadecanoate + H(+). It catalyses the reaction S-hexadecanoyl-N-acetylcysteine methyl ester + H2O = N-acetylcysteine methyl ester + hexadecanoate + H(+). Its function is as follows. Has thioesterase activity against fatty acid thioesters with 14 -18 carbons, including palmitoyl-CoA, S-palmitoyl-N-acetylcysteamine, and palmitoylated proteins. In contrast to PPT2, PPT1 can hydrolyze palmitoylated proteins and palmitoylcysteine. The protein is Palmitoyl-protein thioesterase 1 (Ppt1) of Mus musculus (Mouse).